We begin with the raw amino-acid sequence, 610 residues long: UvrABC system protein C (610 aa).

Positions 16-94 (SQPGVYRMYD…IKLYQPRYNV (79 aa)) constitute a GIY-YIG domain. Residues 204 to 239 (DQVLTQLISRMETASQNLEFEEAARIRDQIQAVRRV) enclose the UVR domain.

Belongs to the UvrC family. Interacts with UvrB in an incision complex.

Its subcellular location is the cytoplasm. In terms of biological role, the UvrABC repair system catalyzes the recognition and processing of DNA lesions. UvrC both incises the 5' and 3' sides of the lesion. The N-terminal half is responsible for the 3' incision and the C-terminal half is responsible for the 5' incision. The sequence is that of UvrABC system protein C from Shigella boydii serotype 18 (strain CDC 3083-94 / BS512).